The chain runs to 238 residues: Ribonuclease PH (238 aa).

Phosphate contacts are provided by residues arginine 86 and 124-126 (GTR).

Belongs to the RNase PH family. Homohexameric ring arranged as a trimer of dimers.

It catalyses the reaction tRNA(n+1) + phosphate = tRNA(n) + a ribonucleoside 5'-diphosphate. Phosphorolytic 3'-5' exoribonuclease that plays an important role in tRNA 3'-end maturation. Removes nucleotide residues following the 3'-CCA terminus of tRNAs; can also add nucleotides to the ends of RNA molecules by using nucleoside diphosphates as substrates, but this may not be physiologically important. Probably plays a role in initiation of 16S rRNA degradation (leading to ribosome degradation) during starvation. This Vibrio atlanticus (strain LGP32) (Vibrio splendidus (strain Mel32)) protein is Ribonuclease PH.